Consider the following 164-residue polypeptide: Endoribonuclease YbeY (164 aa).

Residues histidine 111, histidine 115, and histidine 121 each contribute to the Zn(2+) site. A disordered region spans residues glutamate 140 to glutamate 164. The segment covering histidine 155–glutamate 164 has biased composition (polar residues).

The protein belongs to the endoribonuclease YbeY family. Zn(2+) serves as cofactor.

It is found in the cytoplasm. Functionally, single strand-specific metallo-endoribonuclease involved in late-stage 70S ribosome quality control and in maturation of the 3' terminus of the 16S rRNA. This is Endoribonuclease YbeY from Pseudomonas fluorescens (strain SBW25).